We begin with the raw amino-acid sequence, 872 residues long: G-type lectin S-receptor-like serine/threonine-protein kinase At5g24080 (872 aa).

The first 25 residues, 1 to 25 (MSSFHFYFPSVGLFSFFCFFLVSLA), serve as a signal peptide directing secretion. Over 26–472 (TEPHIGLGSK…SRKSHGLRQK (447 aa)) the chain is Extracellular. Residues 30-149 (IGLGSKLKAS…EVTAGPTIWQ (120 aa)) form the Bulb-type lectin domain. Residues N49, N117, N208, N219, N261, and N294 are each glycosylated (N-linked (GlcNAc...) asparagine). The 39-residue stretch at 306–344 (VSNPCDIAGICGNGVCNLDRTKKNADCLCLPGSVKLPDQ) folds into the EGF-like; atypical domain. Cystine bridges form between C310-C321 and C316-C332. N-linked (GlcNAc...) asparagine glycans are attached at residues N353, N367, and N390. One can recognise a PAN domain in the interval 360 to 447 (CESNINRNGS…PGSTLFVKTR (88 aa)). Cystine bridges form between C400-C424 and C404-C410. Residues N449 and N459 are each glycosylated (N-linked (GlcNAc...) asparagine). A helical transmembrane segment spans residues 473–493 (VLVIPIVVGMLVLVALLGMLL). At 494-872 (YYNLDRKRTL…TCSYSSMSPR (379 aa)) the chain is on the cytoplasmic side. T521 carries the phosphothreonine modification. The Protein kinase domain maps to 530–810 (NNFSQLLGSG…LEGTSDEINL (281 aa)). ATP is bound by residues 536 to 544 (LGSGGFGTV) and K558. Y603 bears the Phosphotyrosine mark. The caM-binding stretch occupies residues 619 to 637 (EQTANLLDWRTRFEIAVAT). D656 functions as the Proton acceptor in the catalytic mechanism. A phosphothreonine mark is found at T690 and T695.

It belongs to the protein kinase superfamily. Ser/Thr protein kinase family.

It localises to the cell membrane. The catalysed reaction is L-seryl-[protein] + ATP = O-phospho-L-seryl-[protein] + ADP + H(+). It carries out the reaction L-threonyl-[protein] + ATP = O-phospho-L-threonyl-[protein] + ADP + H(+). The sequence is that of G-type lectin S-receptor-like serine/threonine-protein kinase At5g24080 from Arabidopsis thaliana (Mouse-ear cress).